The primary structure comprises 514 residues: MNILKSLISVGIMTLISRIFGFFRDVLIAHIFGASMFTDAFFIAFKIPNLLRRIFAEGAFYQSFIPILIDYKSRKDKEYIQEFIRSTCGFTILVLTTFVILGIIFSDYIIFISAPGFSESSKKLQLASNLLKIMFPYILFISLSSLCSSILNSYNYFFIPSLSSSLLNISIIVFSFFFSDYFEPSIISLAWSVMIGGFFQLFYQFPHLYKIKMLVFPKINFKNIGLIKVLKKMGPSTLGSCANQISLIFNTIFSSLLHSGSISWIYYADRLIEFPIGIIGVSLSTILFTSFSCSYSNNTQSEYKILLNWGIRFGLILSLPISVILFMFSKPLVIILFQYGKFTDFDVLMTQKALELYSFGLVSFILVKILVSAFYSCQEVNIPMRISILTLFLTQLMNPFLIFYFQHSGLALSCSIASWINFFLLYWKLYQKGIINFKLNDFIFIFRLLIAVLVMTFFLIFMLYFIPSWKIGSFFDKIIRLFTILSISGIVYLIALHFLGIRLLNYSDKLFQKK.

The next 14 membrane-spanning stretches (helical) occupy residues 3–23 (ILKS…FGFF), 25–45 (DVLI…FIAF), 92–112 (ILVL…IIFI), 130–150 (LLKI…CSSI), 157–177 (FFIP…FSFF), 186–206 (IISL…YQFP), 245–265 (ISLI…ISWI), 271–291 (LIEF…FTSF), 315–335 (LILS…LVII), 354–374 (LELY…VSAF), 386–406 (ISIL…FYFQ), 409–429 (GLAL…YWKL), 448–468 (LLIA…FIPS), and 481–501 (LFTI…FLGI).

This sequence belongs to the MurJ/MviN family.

It localises to the cell inner membrane. The protein operates within cell wall biogenesis; peptidoglycan biosynthesis. Functionally, involved in peptidoglycan biosynthesis. Transports lipid-linked peptidoglycan precursors from the inner to the outer leaflet of the cytoplasmic membrane. The protein is Probable lipid II flippase MurJ of Buchnera aphidicola subsp. Schizaphis graminum (strain Sg).